A 111-amino-acid chain; its full sequence is Protein GLUTAMINE DUMPER 6 (111 aa).

Residues 1–16 lie on the Extracellular side of the membrane; the sequence is MRPTPKVEIWKSPVPY. A helical membrane pass occupies residues 17–37; that stretch reads LFGGLFLLVLLIALALLSLVC. Residues 38 to 111 lie on the Cytoplasmic side of the membrane; sequence THQKPSSSSN…NCDNVTVIST (74 aa). The span at 40-49 shows a compositional bias: polar residues; the sequence is QKPSSSSNNN. The interval 40-63 is disordered; the sequence is QKPSSSSNNNHMDEEDDVGDKDAK. The short motif at 75 to 79 is the VIMAG; degenerate element; that stretch reads VILAG.

The protein belongs to the GLUTAMINE DUMPER 1 (TC 9.B.60) family. As to expression, expressed in the vascular tissues.

The protein resides in the membrane. Probable subunit of an amino acid transporter involved in the regulation of the amino acid metabolism. Stimulates amino acid export by activating nonselective amino acid facilitators. This is Protein GLUTAMINE DUMPER 6 (GDU6) from Arabidopsis thaliana (Mouse-ear cress).